A 71-amino-acid chain; its full sequence is Translation initiation factor IF-1 (71 aa).

The 71-residue stretch at 1–71 folds into the S1-like domain; sequence MANDVIEIEG…TKGRITYRFR (71 aa).

This sequence belongs to the IF-1 family. Component of the 30S ribosomal translation pre-initiation complex which assembles on the 30S ribosome in the order IF-2 and IF-3, IF-1 and N-formylmethionyl-tRNA(fMet); mRNA recruitment can occur at any time during PIC assembly.

The protein resides in the cytoplasm. Functionally, one of the essential components for the initiation of protein synthesis. Stabilizes the binding of IF-2 and IF-3 on the 30S subunit to which N-formylmethionyl-tRNA(fMet) subsequently binds. Helps modulate mRNA selection, yielding the 30S pre-initiation complex (PIC). Upon addition of the 50S ribosomal subunit IF-1, IF-2 and IF-3 are released leaving the mature 70S translation initiation complex. The chain is Translation initiation factor IF-1 from Leuconostoc mesenteroides subsp. mesenteroides (strain ATCC 8293 / DSM 20343 / BCRC 11652 / CCM 1803 / JCM 6124 / NCDO 523 / NBRC 100496 / NCIMB 8023 / NCTC 12954 / NRRL B-1118 / 37Y).